A 227-amino-acid polypeptide reads, in one-letter code: Cytochrome c oxidase subunit 2 (227 aa).

The Mitochondrial intermembrane segment spans residues 1 to 14; that stretch reads MAHAAQVGLQDATS. A helical membrane pass occupies residues 15 to 45; sequence PIMEELIIFHDHALMIIFLICFLVLYALFLT. At 46-59 the chain is on the mitochondrial matrix side; sequence LTTKLTNTSISDAQ. A helical transmembrane segment spans residues 60 to 87; it reads EMETVWTILPAIILVLIALPSLRILYMT. The Mitochondrial intermembrane portion of the chain corresponds to 88–227; that stretch reads DEVNDPSFTI…IFEMGPVFTL (140 aa). The Cu cation site is built by His-161, Cys-196, Glu-198, Cys-200, His-204, and Met-207. Position 198 (Glu-198) interacts with Mg(2+).

Belongs to the cytochrome c oxidase subunit 2 family. Component of the cytochrome c oxidase (complex IV, CIV), a multisubunit enzyme composed of 14 subunits. The complex is composed of a catalytic core of 3 subunits MT-CO1, MT-CO2 and MT-CO3, encoded in the mitochondrial DNA, and 11 supernumerary subunits COX4I, COX5A, COX5B, COX6A, COX6B, COX6C, COX7A, COX7B, COX7C, COX8 and NDUFA4, which are encoded in the nuclear genome. The complex exists as a monomer or a dimer and forms supercomplexes (SCs) in the inner mitochondrial membrane with NADH-ubiquinone oxidoreductase (complex I, CI) and ubiquinol-cytochrome c oxidoreductase (cytochrome b-c1 complex, complex III, CIII), resulting in different assemblies (supercomplex SCI(1)III(2)IV(1) and megacomplex MCI(2)III(2)IV(2)). Found in a complex with TMEM177, COA6, COX18, COX20, SCO1 and SCO2. Interacts with TMEM177 in a COX20-dependent manner. Interacts with COX20. Interacts with COX16. Requires Cu cation as cofactor.

It is found in the mitochondrion inner membrane. It catalyses the reaction 4 Fe(II)-[cytochrome c] + O2 + 8 H(+)(in) = 4 Fe(III)-[cytochrome c] + 2 H2O + 4 H(+)(out). Functionally, component of the cytochrome c oxidase, the last enzyme in the mitochondrial electron transport chain which drives oxidative phosphorylation. The respiratory chain contains 3 multisubunit complexes succinate dehydrogenase (complex II, CII), ubiquinol-cytochrome c oxidoreductase (cytochrome b-c1 complex, complex III, CIII) and cytochrome c oxidase (complex IV, CIV), that cooperate to transfer electrons derived from NADH and succinate to molecular oxygen, creating an electrochemical gradient over the inner membrane that drives transmembrane transport and the ATP synthase. Cytochrome c oxidase is the component of the respiratory chain that catalyzes the reduction of oxygen to water. Electrons originating from reduced cytochrome c in the intermembrane space (IMS) are transferred via the dinuclear copper A center (CU(A)) of subunit 2 and heme A of subunit 1 to the active site in subunit 1, a binuclear center (BNC) formed by heme A3 and copper B (CU(B)). The BNC reduces molecular oxygen to 2 water molecules using 4 electrons from cytochrome c in the IMS and 4 protons from the mitochondrial matrix. The protein is Cytochrome c oxidase subunit 2 (MT-CO2) of Pan paniscus (Pygmy chimpanzee).